Consider the following 403-residue polypeptide: Aromatic-L-amino-acid decarboxylase (403 aa).

Thr-8 is a substrate binding site. Ala-74 and Ser-75 together coordinate pyridoxal 5'-phosphate. His-118 serves as a coordination point for substrate. Residue His-118 is part of the active site. Residues Asp-197 and Asn-226 each contribute to the pyridoxal 5'-phosphate site. Lys-229 is modified (N6-(pyridoxal phosphate)lysine). Positions 250–276 are disordered; the sequence is NAFNVDPLYLKHDMQGSAPDYRHWQIP.

It belongs to the group II decarboxylase family. In terms of assembly, homodimer. Pyridoxal 5'-phosphate is required as a cofactor.

It catalyses the reaction L-dopa + H(+) = dopamine + CO2. The catalysed reaction is 5-hydroxy-L-tryptophan + H(+) = serotonin + CO2. Catalyzes the decarboxylation of L-3,4-dihydroxyphenylalanine (L-DOPA) to dopamine and L-5-hydroxytryptophan (5-HTP) to serotonin. Catalyzes the formation of serotonin more efficiently than dopamine. Displays no activity to tyrosine. Variation in the synthesis of bioamines may be a factor contributing to natural variation in life span. This chain is Aromatic-L-amino-acid decarboxylase (Ddc), found in Drosophila lebanonensis (Fruit fly).